A 321-amino-acid polypeptide reads, in one-letter code: Ribose-phosphate pyrophosphokinase (321 aa).

ATP contacts are provided by residues 44 to 46 and 103 to 104; these read DGE and RQ. Residues His-137 and Asp-179 each coordinate Mg(2+). The active site involves Lys-202. Residues Arg-204, Asp-228, and 232 to 236 each bind D-ribose 5-phosphate; that span reads DTAGT.

The protein belongs to the ribose-phosphate pyrophosphokinase family. Class I subfamily. In terms of assembly, homohexamer. Mg(2+) serves as cofactor.

The protein resides in the cytoplasm. The enzyme catalyses D-ribose 5-phosphate + ATP = 5-phospho-alpha-D-ribose 1-diphosphate + AMP + H(+). Its pathway is metabolic intermediate biosynthesis; 5-phospho-alpha-D-ribose 1-diphosphate biosynthesis; 5-phospho-alpha-D-ribose 1-diphosphate from D-ribose 5-phosphate (route I): step 1/1. Its function is as follows. Involved in the biosynthesis of the central metabolite phospho-alpha-D-ribosyl-1-pyrophosphate (PRPP) via the transfer of pyrophosphoryl group from ATP to 1-hydroxyl of ribose-5-phosphate (Rib-5-P). The protein is Ribose-phosphate pyrophosphokinase of Staphylococcus epidermidis (strain ATCC 35984 / DSM 28319 / BCRC 17069 / CCUG 31568 / BM 3577 / RP62A).